Consider the following 517-residue polypeptide: Cytochrome P450 monooxygenase polD (517 aa).

A helical transmembrane segment spans residues 5 to 27 (VVLVGIVVLVLAYLSSTGKVYPH). Residue Cys-435 participates in heme binding.

The protein belongs to the cytochrome P450 family. Heme is required as a cofactor.

The protein resides in the membrane. Functionally, cytochrome P450 monooxygenase; part of the gene cluster that mediates the biosynthesis of antifungal fernane-type triterpenoid polytolypin. PolD doe not seem to be involved in the biosynthesis of polytolypin. Within the pathway, the triterpene cyclase polA first catalyzes the cyclization of 2,3-oxidosqualene to motiol, polc converts the 4-alpha-methyl group of motiol to a carboxyl group, polB is responsible for appending a hydroxyl group at the 2-alpha position and polE is a dual functional P450, which can catalyze the formation of both the 1-beta-hydroxyl group and 10-beta-carboxyl group. The polypeptide is Cytochrome P450 monooxygenase polD (Polytolypa hystricis (strain UAMH7299)).